We begin with the raw amino-acid sequence, 163 residues long: Cytochrome c-type biogenesis protein CcmE (163 aa).

Residues 1–8 are Cytoplasmic-facing; it reads MNPRRKKR. The chain crosses the membrane as a helical; Signal-anchor for type II membrane protein span at residues 9–29; that stretch reads LTLAVALIVGVAGAASLLLYA. At 30-163 the chain is on the periplasmic side; the sequence is LNSNLNLFYT…QEGVEKTAQY (134 aa). The heme site is built by His-131 and Tyr-135.

The protein belongs to the CcmE/CycJ family.

It is found in the cell inner membrane. Its function is as follows. Heme chaperone required for the biogenesis of c-type cytochromes. Transiently binds heme delivered by CcmC and transfers the heme to apo-cytochromes in a process facilitated by CcmF and CcmH. In Shewanella denitrificans (strain OS217 / ATCC BAA-1090 / DSM 15013), this protein is Cytochrome c-type biogenesis protein CcmE.